A 364-amino-acid polypeptide reads, in one-letter code: Lysophosphatidic acid receptor 1 (364 aa).

Topologically, residues 1 to 50 (MAAISTSIPVISQPQFTAMNEPQCFYNESIAFFYNRSGKHLATEWNTVSK) are extracellular. Intrachain disulfides connect cysteine 24-cysteine 190 and cysteine 188-cysteine 195. Residues asparagine 27 and asparagine 35 are each glycosylated (N-linked (GlcNAc...) asparagine). Residue lysine 39 coordinates a 1-acyl-sn-glycero-3-phosphate. The helical transmembrane segment at 51–75 (LVMGLGITVCIFIMLANLLVMVAIY) threads the bilayer. Over 76 to 83 (VNRRFHFP) the chain is Cytoplasmic. A helical transmembrane segment spans residues 84 to 107 (IYYLMANLAAADFFAGLAYFYLMF). At 108 to 121 (NTGPNTRRLTVSTW) the chain is on the extracellular side. Residues 122-144 (LLRQGLIDTSLTASVANLLAIAI) traverse the membrane as a helical segment. 124 to 129 (RQGLID) serves as a coordination point for a 1-acyl-sn-glycero-3-phosphate. At 145–163 (ERHITVFRMQLHTRMSNRR) the chain is on the cytoplasmic side. The helical transmembrane segment at 164 to 184 (VVVVIVVIWTMAIVMGAIPSV) threads the bilayer. Topologically, residues 185 to 204 (GWNCICDIENCSNMAPLYSD) are extracellular. Residues 205-225 (SYLVFWAIFNLVTFVVMVVLY) traverse the membrane as a helical segment. Residue tryptophan 210 coordinates a 1-acyl-sn-glycero-3-phosphate. Residues 226–255 (AHIFGYVRQRTMRMSRHSSGPRRNRDTMMS) are Cytoplasmic-facing. The helical transmembrane segment at 256–280 (LLKTVVIVLGAFIICWTPGLVLLLL) threads the bilayer. The Extracellular segment spans residues 281-294 (DVCCPQCDVLAYEK). Cysteine 284 and cysteine 287 form a disulfide bridge. A helical membrane pass occupies residues 295–315 (FFLLLAEFNSAMNPIIYSYRD). At 316–364 (KEMSATFRQILCCQRSENPTGPTEGSDRSASSLNHTILAGVHSNDHSVV) the chain is on the cytoplasmic side. The residue at position 341 (serine 341) is a Phosphoserine. Threonine 351 is modified (phosphothreonine).

The protein belongs to the G-protein coupled receptor 1 family. In terms of assembly, interacts with RALA and GRK2. Interacts with GNAQ and GNA13. Interacts with CD14; the interaction is enhanced by exposure to bacterial lipopolysaccharide (LPS). In terms of processing, N-glycosylated. Expressed in many adult organs, including brain, heart, colon, small intestine, placenta, prostate, ovary, pancreas, testes, spleen, skeletal muscle, and kidney. Little or no expression in liver, lung, thymus, or peripheral blood leukocytes. Detected in lung fibroblasts from bronchoalveolar fluid from patients with idiopathic pulmonary fibrosis. Detected in bone marrow-derived mesenchymal stem cells.

It is found in the cell surface. It localises to the cell membrane. Its subcellular location is the endosome. Its function is as follows. Receptor for lysophosphatidic acid (LPA). Plays a role in the reorganization of the actin cytoskeleton, cell migration, differentiation and proliferation, and thereby contributes to the responses to tissue damage and infectious agents. Activates downstream signaling cascades via the G(i)/G(o), G(12)/G(13), and G(q) families of heteromeric G proteins. Signaling inhibits adenylyl cyclase activity and decreases cellular cAMP levels. Signaling triggers an increase of cytoplasmic Ca(2+) levels. Activates RALA; this leads to the activation of phospholipase C (PLC) and the formation of inositol 1,4,5-trisphosphate. Signaling mediates activation of down-stream MAP kinases. Contributes to the regulation of cell shape. Promotes Rho-dependent reorganization of the actin cytoskeleton in neuronal cells and neurite retraction. Promotes the activation of Rho and the formation of actin stress fibers. Promotes formation of lamellipodia at the leading edge of migrating cells via activation of RAC1. Through its function as LPA receptor, plays a role in chemotaxis and cell migration, including responses to injury and wounding. Plays a role in triggering inflammation in response to bacterial lipopolysaccharide (LPS) via its interaction with CD14. Promotes cell proliferation in response to LPA. Inhibits the intracellular ciliogenesis pathway in response to LPA and through AKT1 activation. Required for normal skeleton development. May play a role in osteoblast differentiation. Required for normal brain development. Required for normal proliferation, survival and maturation of newly formed neurons in the adult dentate gyrus. Plays a role in pain perception and in the initiation of neuropathic pain. This Homo sapiens (Human) protein is Lysophosphatidic acid receptor 1 (LPAR1).